The following is a 690-amino-acid chain: Methionine--tRNA ligase (690 aa).

The 'HIGH' region signature appears at 20–30; the sequence is PYANGSIHLGH. Zn(2+)-binding residues include C151, C154, C164, and C167. Positions 337–341 match the 'KMSKS' region motif; it reads KMSKS. Residue K340 coordinates ATP. Residues 589-690 enclose the tRNA-binding domain; the sequence is DFAKVDLRIA…EGAQPGMRVM (102 aa).

Belongs to the class-I aminoacyl-tRNA synthetase family. MetG type 1 subfamily. Homodimer. Zn(2+) is required as a cofactor.

The protein resides in the cytoplasm. The catalysed reaction is tRNA(Met) + L-methionine + ATP = L-methionyl-tRNA(Met) + AMP + diphosphate. Functionally, is required not only for elongation of protein synthesis but also for the initiation of all mRNA translation through initiator tRNA(fMet) aminoacylation. This chain is Methionine--tRNA ligase, found in Vibrio vulnificus (strain CMCP6).